Here is a 56-residue protein sequence, read N- to C-terminus: Cruciferin (56 aa).

Position 45 is a phosphothreonine (threonine 45).

It belongs to the 11S seed storage protein (globulins) family. As to quaternary structure, hexamer; each subunit is composed of an acidic and a basic chain derived from a single precursor and linked by a disulfide bond.

Functionally, this is a seed storage protein. The protein is Cruciferin of Sinapis alba (White mustard).